The following is a 272-amino-acid chain: Glycerol-3-phosphate acyltransferase (272 aa).

6 consecutive transmembrane segments (helical) span residues 9–29 (IIIL…GILI), 60–80 (AIVM…CLLI), 99–119 (VIIY…CFYF), 149–169 (ASIS…ICLI), 173–193 (VSLA…IPHL), and 226–246 (LNWW…VLVI).

Belongs to the PlsY family. In terms of assembly, probably interacts with PlsX.

The protein resides in the cell membrane. It carries out the reaction an acyl phosphate + sn-glycerol 3-phosphate = a 1-acyl-sn-glycero-3-phosphate + phosphate. It functions in the pathway lipid metabolism; phospholipid metabolism. In terms of biological role, catalyzes the transfer of an acyl group from acyl-phosphate (acyl-PO(4)) to glycerol-3-phosphate (G3P) to form lysophosphatidic acid (LPA). This enzyme utilizes acyl-phosphate as fatty acyl donor, but not acyl-CoA or acyl-ACP. This is Glycerol-3-phosphate acyltransferase from Malacoplasma penetrans (strain HF-2) (Mycoplasma penetrans).